The primary structure comprises 55 residues: U-reduvitoxin-Pr2a (55 aa).

Positions 1-21 (MMKFLLVLFLITITLITMAYS) are cleaved as a signal peptide. Cystine bridges form between cysteine 26/cysteine 41, cysteine 33/cysteine 46, and cysteine 40/cysteine 51.

The protein belongs to the venom Ptu1-like knottin family. Expressed by the venom gland (posterior main gland) (at protein level).

Its subcellular location is the secreted. Functionally, binds reversibly and blocks P/Q-type voltage-gated calcium channels (Cav). In Platymeris rhadamanthus (Red spot assassin bug), this protein is U-reduvitoxin-Pr2a.